Here is a 178-residue protein sequence, read N- to C-terminus: Fatty-acid and retinol-binding protein 1 (178 aa).

The first 16 residues, 1–16 (MYHQLILMALIGVIMA), serve as a signal peptide directing secretion. N44 and N75 each carry an N-linked (GlcNAc...) asparagine glycan. Coiled-coil stretches lie at residues 67–89 (DAALEALKNTSDKLYQKAVELRN) and 122–154 (QKLDMEKLKQAARDIIAKYEALNEETREELKAT). N-linked (GlcNAc...) asparagine glycosylation occurs at N157.

It belongs to the fatty-acid and retinol-binding protein (FARBP) family. Post-translationally, N-glycosylated.

Its subcellular location is the secreted. In terms of biological role, binds retinol and different fatty acids. This chain is Fatty-acid and retinol-binding protein 1, found in Onchocerca dukei (Filarial nematode worm).